The primary structure comprises 247 residues: 5'-nucleotidase SurE (247 aa).

A divalent metal cation is bound by residues D8, D9, S39, and N95.

It belongs to the SurE nucleotidase family. A divalent metal cation serves as cofactor.

The protein resides in the cytoplasm. The enzyme catalyses a ribonucleoside 5'-phosphate + H2O = a ribonucleoside + phosphate. In terms of biological role, nucleotidase that shows phosphatase activity on nucleoside 5'-monophosphates. In Thermotoga petrophila (strain ATCC BAA-488 / DSM 13995 / JCM 10881 / RKU-1), this protein is 5'-nucleotidase SurE.